The following is a 401-amino-acid chain: UPF0242 protein CPn_0755/CP_1117/CPj0755/CpB0783 (401 aa).

Belongs to the UPF0242 family.

The chain is UPF0242 protein CPn_0755/CP_1117/CPj0755/CpB0783 from Chlamydia pneumoniae (Chlamydophila pneumoniae).